Reading from the N-terminus, the 458-residue chain is ATP synthase subunit beta (458 aa).

148 to 155 is a binding site for ATP; it reads GGAGVGKT.

The protein belongs to the ATPase alpha/beta chains family. As to quaternary structure, F-type ATPases have 2 components, CF(1) - the catalytic core - and CF(0) - the membrane proton channel. CF(1) has five subunits: alpha(3), beta(3), gamma(1), delta(1), epsilon(1). CF(0) has three main subunits: a(1), b(2) and c(9-12). The alpha and beta chains form an alternating ring which encloses part of the gamma chain. CF(1) is attached to CF(0) by a central stalk formed by the gamma and epsilon chains, while a peripheral stalk is formed by the delta and b chains.

It is found in the cell inner membrane. It catalyses the reaction ATP + H2O + 4 H(+)(in) = ADP + phosphate + 5 H(+)(out). Its function is as follows. Produces ATP from ADP in the presence of a proton gradient across the membrane. The catalytic sites are hosted primarily by the beta subunits. The chain is ATP synthase subunit beta from Actinobacillus succinogenes (strain ATCC 55618 / DSM 22257 / CCUG 43843 / 130Z).